The following is a 560-amino-acid chain: DNA ligase B (560 aa).

The active-site N6-AMP-lysine intermediate is lysine 124.

This sequence belongs to the NAD-dependent DNA ligase family. LigB subfamily.

The enzyme catalyses NAD(+) + (deoxyribonucleotide)n-3'-hydroxyl + 5'-phospho-(deoxyribonucleotide)m = (deoxyribonucleotide)n+m + AMP + beta-nicotinamide D-nucleotide.. Its function is as follows. Catalyzes the formation of phosphodiester linkages between 5'-phosphoryl and 3'-hydroxyl groups in double-stranded DNA using NAD as a coenzyme and as the energy source for the reaction. The polypeptide is DNA ligase B (Escherichia coli O1:K1 / APEC).